Consider the following 372-residue polypeptide: MFEFEITSDCINTGARTGIFHTPNGKVNTPKFMPVGTLATVKGISSKQLISTGSEMILSNTFHLHLQPGEKLVKASGGIHKFMNWPKPILTDSGGYQVFSLAKLNNISDEGVEFKNPRDGSHVFLSPEKVIKIQMDLGSDVAMAFDHCPPHTANENDIEDSLERTHSWLQKCVETHQKSNQALFGIVQGGKYPRLREYSAKYTSSFDLPGIAVGGVSVGEAVEEIHSVINYVPKFLPINKPRYLMGIGSLKEISLAVANGFDIFDCVLPTRLGRHGTAFFNDERLNLRNARFKNDFSPIDKTCKCETCKSYSRAYLHHLIRNDEILGLSLISLHNIAHLIRFTNAISTAIRDNCFTNDFAPWKTSSIAHHTW.

Asp92 acts as the Proton acceptor in catalysis. Substrate contacts are provided by residues 92–96 (DSGGY), Asp146, Gln188, and Gly215. The interval 246–252 (GIGSLKE) is RNA binding. Asp265 serves as the catalytic Nucleophile. An RNA binding; important for wobble base 34 recognition region spans residues 270 to 274 (TRLGR). Residues Cys303, Cys305, Cys308, and His334 each coordinate Zn(2+).

It belongs to the queuine tRNA-ribosyltransferase family. In terms of assembly, homodimer. Within each dimer, one monomer is responsible for RNA recognition and catalysis, while the other monomer binds to the replacement base PreQ1. Zn(2+) serves as cofactor.

The enzyme catalyses 7-aminomethyl-7-carbaguanine + guanosine(34) in tRNA = 7-aminomethyl-7-carbaguanosine(34) in tRNA + guanine. It functions in the pathway tRNA modification; tRNA-queuosine biosynthesis. Functionally, catalyzes the base-exchange of a guanine (G) residue with the queuine precursor 7-aminomethyl-7-deazaguanine (PreQ1) at position 34 (anticodon wobble position) in tRNAs with GU(N) anticodons (tRNA-Asp, -Asn, -His and -Tyr). Catalysis occurs through a double-displacement mechanism. The nucleophile active site attacks the C1' of nucleotide 34 to detach the guanine base from the RNA, forming a covalent enzyme-RNA intermediate. The proton acceptor active site deprotonates the incoming PreQ1, allowing a nucleophilic attack on the C1' of the ribose to form the product. After dissociation, two additional enzymatic reactions on the tRNA convert PreQ1 to queuine (Q), resulting in the hypermodified nucleoside queuosine (7-(((4,5-cis-dihydroxy-2-cyclopenten-1-yl)amino)methyl)-7-deazaguanosine). The polypeptide is Queuine tRNA-ribosyltransferase (Prochlorococcus marinus (strain MIT 9301)).